The following is a 311-amino-acid chain: Methionyl-tRNA formyltransferase (311 aa).

112–115 (SLLP) contributes to the (6S)-5,6,7,8-tetrahydrofolate binding site.

The protein belongs to the Fmt family.

It carries out the reaction L-methionyl-tRNA(fMet) + (6R)-10-formyltetrahydrofolate = N-formyl-L-methionyl-tRNA(fMet) + (6S)-5,6,7,8-tetrahydrofolate + H(+). Attaches a formyl group to the free amino group of methionyl-tRNA(fMet). The formyl group appears to play a dual role in the initiator identity of N-formylmethionyl-tRNA by promoting its recognition by IF2 and preventing the misappropriation of this tRNA by the elongation apparatus. The chain is Methionyl-tRNA formyltransferase from Agrobacterium fabrum (strain C58 / ATCC 33970) (Agrobacterium tumefaciens (strain C58)).